The primary structure comprises 180 residues: uncharacterized protein (180 aa).

It belongs to the CdaR family.

This is an uncharacterized protein from Thermomonospora curvata.